The chain runs to 367 residues: Phthiodiolone/phenolphthiodiolone dimycocerosates ketoreductase (367 aa).

Belongs to the mer family. Phthiodiolone/phenolphthiodiolone dimycocerosates ketoreductase subfamily.

Catalyzes the reduction of the keto moiety of phthiodiolone dimycocerosates (DIM B) and glycosylated phenolphthiodiolone dimycocerosates to form the intermediate compounds phthiotriol and glycosylated phenolphthiotriol dimycocerosates during phthiocerol dimycocerosates (DIM A) and glycosylated phenolphthiocerol dimycocerosates (PGL) biosynthesis. In Mycobacterium kansasii, this protein is Phthiodiolone/phenolphthiodiolone dimycocerosates ketoreductase.